The chain runs to 298 residues: Hydroxymethylglutaryl-CoA lyase, mitochondrial (298 aa).

In terms of domain architecture, Pyruvate carboxyltransferase spans 6-273; the sequence is VKVVEVGPRD…HTGVDLQKLM (268 aa). Residue R14 coordinates substrate. D15 is an a divalent metal cation binding site. N6-acetyllysine is present on K21. Residues H206 and H208 each coordinate a divalent metal cation. C239 is an active-site residue. N248 contributes to the a divalent metal cation binding site. A Microbody targeting signal motif is present at residues 296–298; sequence CRL.

Belongs to the HMG-CoA lyase family. Homodimer; disulfide-linked. Can also form homotetramers.

The protein resides in the mitochondrion matrix. It localises to the peroxisome. The catalysed reaction is (3S)-3-hydroxy-3-methylglutaryl-CoA = acetoacetate + acetyl-CoA. It participates in metabolic intermediate metabolism; (S)-3-hydroxy-3-methylglutaryl-CoA degradation; acetoacetate from (S)-3-hydroxy-3-methylglutaryl-CoA: step 1/1. Mitochondrial 3-hydroxy-3-methylglutaryl-CoA lyase that catalyzes a cation-dependent cleavage of (S)-3-hydroxy-3-methylglutaryl-CoA into acetyl-CoA and acetoacetate, a key step in ketogenesis. Terminal step in leucine catabolism. Ketone bodies (beta-hydroxybutyrate, acetoacetate and acetone) are essential as an alternative source of energy to glucose, as lipid precursors and as regulators of metabolism. This is Hydroxymethylglutaryl-CoA lyase, mitochondrial (HMGCL) from Gallus gallus (Chicken).